Reading from the N-terminus, the 390-residue chain is Heat stress transcription factor B-2b (390 aa).

The tract at residues 165–212 is disordered; that stretch reads TRDGSPVLSGEEQVISSSSSPEPPLVLPQAPSGSGSGGVASGDVGDEN. Residues 206-237 adopt a coiled-coil conformation; that stretch reads GDVGDENERLRRENAQLARELSQMRKLCNNIL. Positions 215 to 244 are hydrophobic repeat HR-A/B; it reads LRRENAQLARELSQMRKLCNNILLLMSKYA. The Nuclear localization signal motif lies at 318–322; sequence RKRMR. The segment at 322-363 is disordered; the sequence is RHDGGGDDDHAATVKAEPMDGRPHGKDEQSAETQAWPIYRPR. Positions 323–350 are enriched in basic and acidic residues; the sequence is HDGGGDDDHAATVKAEPMDGRPHGKDEQ.

It belongs to the HSF family. Class B subfamily. As to quaternary structure, homotrimer. Post-translationally, exhibits temperature-dependent phosphorylation.

Its subcellular location is the nucleus. In terms of biological role, transcriptional regulator that specifically binds DNA of heat shock promoter elements (HSE). This is Heat stress transcription factor B-2b (HSFB2B) from Oryza sativa subsp. japonica (Rice).